The chain runs to 576 residues: Arginine--tRNA ligase (576 aa).

The 'HIGH' region signature appears at 122–132 (PNVAKEMHVGH).

The protein belongs to the class-I aminoacyl-tRNA synthetase family. In terms of assembly, monomer.

It is found in the cytoplasm. It catalyses the reaction tRNA(Arg) + L-arginine + ATP = L-arginyl-tRNA(Arg) + AMP + diphosphate. The chain is Arginine--tRNA ligase from Erwinia tasmaniensis (strain DSM 17950 / CFBP 7177 / CIP 109463 / NCPPB 4357 / Et1/99).